The primary structure comprises 335 residues: Large ribosomal subunit protein uL3 (335 aa).

The disordered stretch occupies residues 1–20 (MATIHRPRRGSLAFSPRKRA).

This sequence belongs to the universal ribosomal protein uL3 family. Part of the 50S ribosomal subunit. Forms a cluster with proteins L14 and L24e.

Functionally, one of the primary rRNA binding proteins, it binds directly near the 3'-end of the 23S rRNA, where it nucleates assembly of the 50S subunit. The sequence is that of Large ribosomal subunit protein uL3 (rpl3) from Methanothrix harundinacea (strain 6Ac) (Methanosaeta harundinacea).